A 141-amino-acid chain; its full sequence is Transmembrane protein 216 (141 aa).

A run of 4 helical transmembrane segments spans residues isoleucine 15–phenylalanine 35, leucine 49–phenylalanine 69, leucine 82–leucine 102, and serine 115–phenylalanine 135.

In terms of assembly, part of the tectonic-like complex (also named B9 complex). Interacts with TMEM107.

The protein resides in the membrane. Its subcellular location is the cytoplasm. The protein localises to the cytoskeleton. It localises to the cilium basal body. Part of the tectonic-like complex which is required for tissue-specific ciliogenesis and may regulate ciliary membrane composition. The polypeptide is Transmembrane protein 216 (TMEM216) (Bos taurus (Bovine)).